The primary structure comprises 492 residues: N-succinylglutamate 5-semialdehyde dehydrogenase (492 aa).

An NAD(+)-binding site is contributed by 220–225 (GSSTTG). Active-site residues include E243 and C277.

This sequence belongs to the aldehyde dehydrogenase family. AstD subfamily.

It carries out the reaction N-succinyl-L-glutamate 5-semialdehyde + NAD(+) + H2O = N-succinyl-L-glutamate + NADH + 2 H(+). It functions in the pathway amino-acid degradation; L-arginine degradation via AST pathway; L-glutamate and succinate from L-arginine: step 4/5. In terms of biological role, catalyzes the NAD-dependent reduction of succinylglutamate semialdehyde into succinylglutamate. This is N-succinylglutamate 5-semialdehyde dehydrogenase from Klebsiella pneumoniae subsp. pneumoniae (strain ATCC 700721 / MGH 78578).